Consider the following 411-residue polypeptide: Squalene synthase (411 aa).

NADP(+) is bound by residues Arg49 and Arg74. Residues Asp77, Glu80, and Asp81 each contribute to the Mg(2+) site. NADP(+) is bound by residues Arg212, Lys312, and Arg314. The helical transmembrane segment at 388 to 408 (SPVLIVVIFIILAIILAQLFG) threads the bilayer.

It belongs to the phytoene/squalene synthase family. Mg(2+) is required as a cofactor.

The protein resides in the membrane. It catalyses the reaction 2 (2E,6E)-farnesyl diphosphate + NADH + H(+) = squalene + 2 diphosphate + NAD(+). It carries out the reaction 2 (2E,6E)-farnesyl diphosphate + NADPH + H(+) = squalene + 2 diphosphate + NADP(+). Converts farnesyl diphosphate (FPP) into squalene, a precursor for sterol biosynthesis in eukaryotes. This chain is Squalene synthase, found in Solanum lycopersicum (Tomato).